Consider the following 405-residue polypeptide: MENIMTLPKIKHVRAWFIGGATAEKGAGGGDYHDQGGNHWIDDHIATPMSKYRDYEQSRQSFGINVLGTLIVEVEAENGQTGFAVSTAGEMGCFIVEKHLNRFIEGKCVSDIKLIHDQMLGATMYYSGSGGLVMNTISCVDLALWDLFGKVVGLPVYKLLGGAVRDEIQFYATGARPDLAKEMGFIGGKMPAHWGPHDGDAGIRKDAAMVADMREKCGPDFWLMLDCWMSQDVNYATKLAHACAPFNLKWIEECLPPQQYEGYRELKRNAPAGMMVTSGEHHGTLQSFRTLAETGIDIMQPDVGWCGGLTTLVEIAALAKSRGQLVVPHGSSVYSHHAVITFTNTPFSEFLMTSPDCSTLRPQFDPILLDEPVPVNGRIHKSVLDKPGFGVELNRDCHLKRPYSH.

2 residues coordinate substrate: H33 and R59. Residues D226, E252, and E280 each coordinate Mg(2+). The Proton acceptor role is filled by H329. Substrate is bound at residue E349.

This sequence belongs to the mandelate racemase/muconate lactonizing enzyme family. RhamD subfamily. As to quaternary structure, homooctamer; tetramer of dimers. Mg(2+) is required as a cofactor.

The catalysed reaction is L-rhamnonate = 2-dehydro-3-deoxy-L-rhamnonate + H2O. In terms of biological role, catalyzes the dehydration of L-rhamnonate to 2-keto-3-deoxy-L-rhamnonate (KDR). The protein is L-rhamnonate dehydratase of Salmonella paratyphi A (strain AKU_12601).